Reading from the N-terminus, the 348-residue chain is EGF-like domain-containing protein 1 (348 aa).

The N-terminal stretch at 1–19 (MFYLSTFMTIVISLSLVSC) is a signal peptide. An EGF-like domain is found at 60–92 (TGSNCTVTCQNNGKCYDGSKCLCSSDYTGDLCE). Intrachain disulfides connect C64-C74, C68-C80, and C82-C91. One can recognise a ZP domain in the interval 99–342 (RCTLDAVVFE…PTCAAPXVGQ (244 aa)).

Prismatic layer of shell (at protein level). Expressed primarily in the mantle with highest level in the mantle edge and lower level in the mantle pallium.

It localises to the secreted. This is EGF-like domain-containing protein 1 from Pinctada maxima (Silver-lipped pearl oyster).